We begin with the raw amino-acid sequence, 424 residues long: Serine--tRNA ligase (424 aa).

Residue 231-233 (TAE) coordinates L-serine. 262 to 264 (RSE) is an ATP binding site. Residue glutamate 285 participates in L-serine binding. Residue 349-352 (EISS) participates in ATP binding. Serine 385 provides a ligand contact to L-serine.

Belongs to the class-II aminoacyl-tRNA synthetase family. Type-1 seryl-tRNA synthetase subfamily. In terms of assembly, homodimer. The tRNA molecule binds across the dimer.

It is found in the cytoplasm. The enzyme catalyses tRNA(Ser) + L-serine + ATP = L-seryl-tRNA(Ser) + AMP + diphosphate + H(+). It carries out the reaction tRNA(Sec) + L-serine + ATP = L-seryl-tRNA(Sec) + AMP + diphosphate + H(+). It participates in aminoacyl-tRNA biosynthesis; selenocysteinyl-tRNA(Sec) biosynthesis; L-seryl-tRNA(Sec) from L-serine and tRNA(Sec): step 1/1. Functionally, catalyzes the attachment of serine to tRNA(Ser). Is also able to aminoacylate tRNA(Sec) with serine, to form the misacylated tRNA L-seryl-tRNA(Sec), which will be further converted into selenocysteinyl-tRNA(Sec). In Bacillus cereus (strain G9842), this protein is Serine--tRNA ligase.